A 95-amino-acid chain; its full sequence is Co-chaperonin GroES (95 aa).

This sequence belongs to the GroES chaperonin family. Heptamer of 7 subunits arranged in a ring. Interacts with the chaperonin GroEL.

The protein resides in the cytoplasm. In terms of biological role, together with the chaperonin GroEL, plays an essential role in assisting protein folding. The GroEL-GroES system forms a nano-cage that allows encapsulation of the non-native substrate proteins and provides a physical environment optimized to promote and accelerate protein folding. GroES binds to the apical surface of the GroEL ring, thereby capping the opening of the GroEL channel. The protein is Co-chaperonin GroES of Novosphingobium aromaticivorans (strain ATCC 700278 / DSM 12444 / CCUG 56034 / CIP 105152 / NBRC 16084 / F199).